The following is a 124-amino-acid chain: Urease subunit beta (124 aa).

Belongs to the urease beta subunit family. Heterotrimer of UreA (gamma), UreB (beta) and UreC (alpha) subunits. Three heterotrimers associate to form the active enzyme.

Its subcellular location is the cytoplasm. The catalysed reaction is urea + 2 H2O + H(+) = hydrogencarbonate + 2 NH4(+). It functions in the pathway nitrogen metabolism; urea degradation; CO(2) and NH(3) from urea (urease route): step 1/1. This Bacillus velezensis (strain DSM 23117 / BGSC 10A6 / LMG 26770 / FZB42) (Bacillus amyloliquefaciens subsp. plantarum) protein is Urease subunit beta.